The chain runs to 248 residues: MSTDKKNRTVSHLMIWNELKWAPSEKQLAQFIHLQELLKEWNKKINLTRLVDGDDFWTAQVCDSLLPLYEELQHPEVSHKYIDIGSGCGFPGIAIAIAMPNSDITLLDSSSKKTTFLKEVSKEIGLDSRIKVVTERAEEAGRNPIFRSNFDYAIARAVASANVVAEYLVPFLNSTGQALIFKGSWSEAEQQILKKALAELNAEIQRTHEFILPNNRGIRNIIRISSINKCPHQYPRSIGKPKKQPLGY.

S-adenosyl-L-methionine-binding positions include Gly-85, Phe-90, 108 to 110 (DSS), 137 to 138 (AE), and Arg-156.

The protein belongs to the methyltransferase superfamily. RNA methyltransferase RsmG family.

It localises to the cytoplasm. Its function is as follows. Specifically methylates the N7 position of a guanine in 16S rRNA. The chain is Ribosomal RNA small subunit methyltransferase G from Prochlorococcus marinus (strain NATL1A).